The following is a 521-amino-acid chain: Probable rhamnogalacturonase B (521 aa).

The signal sequence occupies residues 1–21; the sequence is MRLHAFTLLSLLGLVPSFAAA. The cysteines at positions 42 and 68 are disulfide-linked. Asn145 carries N-linked (GlcNAc...) asparagine glycosylation. Residue Asp219 is the Proton donor of the active site. Cys221 and Cys238 are joined by a disulfide. Asn239 carries an N-linked (GlcNAc...) asparagine glycan. The active site involves His294. N-linked (GlcNAc...) asparagine glycosylation is present at Asn321. 2 disulfides stabilise this stretch: Cys344-Cys350 and Cys372-Cys381. The disordered stretch occupies residues 462–521; it reads ETPAAASRSEQVVQGAPQETGQSAPESAGPVPSGNPGPVPTGGSRPSRHRHGHHHFGSAI. Over residues 469-486 the composition is skewed to polar residues; the sequence is RSEQVVQGAPQETGQSAP. The segment covering 507–521 has biased composition (basic residues); that stretch reads PSRHRHGHHHFGSAI.

The protein belongs to the glycosyl hydrolase 28 family.

The protein localises to the secreted. It carries out the reaction Endohydrolysis of alpha-D-GalA-(1-&gt;2)-alpha-L-Rha glycosidic bond in the rhamnogalacturonan I backbone with initial inversion of anomeric configuration releasing oligosaccharides with beta-D-GalA at the reducing end.. In terms of biological role, pectinolytic enzymes consist of four classes of enzymes: pectine lyase, polygalacturonase, pectin methylesterase and rhamnogalacturonase. Hydrolyzes alpha-D-galacturonopyranosyl-(1,2)-alpha-L-rhamnopyranosyl linkages in the backbone of the hairy regions of pectins. In Aspergillus fumigatus (strain CBS 144.89 / FGSC A1163 / CEA10) (Neosartorya fumigata), this protein is Probable rhamnogalacturonase B (rhgB).